The chain runs to 252 residues: uncharacterized protein (252 aa).

It belongs to the methyltransferase superfamily.

This is an uncharacterized protein from Mycobacterium sp. (strain KMS).